The primary structure comprises 357 residues: tRNA-specific 2-thiouridylase MnmA (357 aa).

Residues 6 to 13 and leucine 32 contribute to the ATP site; that span reads AMSGGVDS. Catalysis depends on cysteine 101, which acts as the Nucleophile. A disulfide bond links cysteine 101 and cysteine 193. Residue glycine 125 participates in ATP binding. The tract at residues 143-145 is interaction with tRNA; it reads KDQ. Catalysis depends on cysteine 193, which acts as the Cysteine persulfide intermediate.

This sequence belongs to the MnmA/TRMU family.

The protein resides in the cytoplasm. It carries out the reaction S-sulfanyl-L-cysteinyl-[protein] + uridine(34) in tRNA + AH2 + ATP = 2-thiouridine(34) in tRNA + L-cysteinyl-[protein] + A + AMP + diphosphate + H(+). In terms of biological role, catalyzes the 2-thiolation of uridine at the wobble position (U34) of tRNA, leading to the formation of s(2)U34. This Mycolicibacterium gilvum (strain PYR-GCK) (Mycobacterium gilvum (strain PYR-GCK)) protein is tRNA-specific 2-thiouridylase MnmA.